Reading from the N-terminus, the 375-residue chain is Pectate lyase 1 (375 aa).

A signal peptide spans 1–21 (MASCTLLAVLVFLCAIVSCFS). Cysteine 28 and cysteine 45 form a disulfide bridge. The N-linked (GlcNAc...) asparagine glycan is linked to asparagine 110. A disulfide bond links cysteine 128 and cysteine 147. Asparagine 148 carries an N-linked (GlcNAc...) asparagine glycan. Residue aspartate 170 coordinates Ca(2+). N-linked (GlcNAc...) asparagine glycosylation is present at asparagine 178. Residues aspartate 194 and aspartate 198 each coordinate Ca(2+). The active site involves arginine 250. Asparagine 293 carries an N-linked (GlcNAc...) asparagine glycan. A disulfide bond links cysteine 306 and cysteine 312. A glycan (N-linked (GlcNAc...) asparagine) is linked at asparagine 352.

This sequence belongs to the polysaccharide lyase 1 family. Amb a subfamily. The cofactor is Ca(2+).

The catalysed reaction is Eliminative cleavage of (1-&gt;4)-alpha-D-galacturonan to give oligosaccharides with 4-deoxy-alpha-D-galact-4-enuronosyl groups at their non-reducing ends.. It functions in the pathway glycan metabolism; pectin degradation; 2-dehydro-3-deoxy-D-gluconate from pectin: step 2/5. In terms of biological role, has pectate lyase activity. The polypeptide is Pectate lyase 1 (Chamaecyparis obtusa (Hinoki false-cypress)).